We begin with the raw amino-acid sequence, 1479 residues long: Protein CHROMATIN REMODELING 20 (1479 aa).

The stretch at 19–49 (EVIVESKEDEMDIIIEENREAEQEVMEVKAR) forms a coiled coil. The segment covering 40-55 (EQEVMEVKARDGRGEQ) has biased composition (basic and acidic residues). The tract at residues 40-109 (EQEVMEVKAR…DELDLEKPLS (70 aa)) is disordered. Over residues 76–86 (DASSRSESSDF) the composition is skewed to low complexity. The segment covering 94-109 (ILSRRDDELDLEKPLS) has biased composition (basic and acidic residues). Residues 109–199 (SEEEIDELIS…EQLDGAGIEL (91 aa)) adopt a coiled-coil conformation. Residues 472-601 (RDDSQNPANN…KKSIELSSDS (130 aa)) enclose the ADD domain. A GATA-type; atypical zinc finger spans residues 483–514 (RCTACNKVAVEVHSHPLLEVIVCMDCKRSIED). Residues 524 to 577 (ERHCEWCGHIADLIDCRTCEKLFCASCIKRNIGEEYMSEAQSSGWDCCCCSPIP) form a PHD-type; atypical zinc finger. A coiled-coil region spans residues 578–598 (LQRLTLELEKAMRDKKSIELS). Positions 594–615 (SIELSSDSSSDSSSDNNSVDTD) are disordered. The span at 598–615 (SSDSSSDSSSDNNSVDTD) shows a compositional bias: low complexity. The region spanning 741–924 (VKSGDKGLGC…YCMVDFVREG (184 aa)) is the Helicase ATP-binding domain. 754–761 (HTMGLGKT) lines the ATP pocket. Positions 875-878 (DEAH) match the DEAH box motif. The 169-residue stretch at 1122 to 1290 (DILSMSADVG…QVHRTISKEE (169 aa)) folds into the Helicase C-terminal domain. The disordered stretch occupies residues 1400–1423 (SESPVVPKPSPSTQTEPLPQPKGF).

It belongs to the SNF2/RAD54 helicase family.

It localises to the nucleus. The protein localises to the chromosome. Its subcellular location is the telomere. In terms of biological role, involved in transcriptional regulation and chromatin remodeling. Facilitates DNA replication in multiple cellular environments and is required for efficient replication of a subset of genomic loci. Binds to DNA tandem repeat sequences in both telomeres and euchromatin and in vitro binds DNA quadruplex structures. May help stabilizing G-rich regions into regular chromatin structures by remodeling G4 DNA and incorporating H3.3-containing nucleosomes. Involved in DNA repair of gamma-irradiation-mediated damages. This is Protein CHROMATIN REMODELING 20 from Arabidopsis thaliana (Mouse-ear cress).